The primary structure comprises 533 residues: GMP synthase [glutamine-hydrolyzing] (533 aa).

Positions 25 to 215 (SIVIFDFGSQ…VFNICKCHAN (191 aa)) constitute a Glutamine amidotransferase type-1 domain. C102 serves as the catalytic Nucleophile. Residues H189 and E191 contribute to the active site. The 193-residue stretch at 216 to 408 (WTMGNYIQES…LGLPDEMIWR (193 aa)) folds into the GMPS ATP-PPase domain. 243–249 (SGGVDSA) lines the ATP pocket.

In terms of assembly, homodimer.

It catalyses the reaction XMP + L-glutamine + ATP + H2O = GMP + L-glutamate + AMP + diphosphate + 2 H(+). It participates in purine metabolism; GMP biosynthesis; GMP from XMP (L-Gln route): step 1/1. In terms of biological role, catalyzes the synthesis of GMP from XMP. This Dehalococcoides mccartyi (strain CBDB1) protein is GMP synthase [glutamine-hydrolyzing].